A 359-amino-acid polypeptide reads, in one-letter code: Glycerol-3-phosphate dehydrogenase [NAD(P)+] (359 aa).

NADPH contacts are provided by Thr11, Trp12, Arg32, and Lys107. 2 residues coordinate sn-glycerol 3-phosphate: Lys107 and Gly138. Ala142 lines the NADPH pocket. 5 residues coordinate sn-glycerol 3-phosphate: Lys193, Asp246, Ser256, Arg257, and Asn258. The active-site Proton acceptor is the Lys193. Arg257 serves as a coordination point for NADPH. Val281 and Glu283 together coordinate NADPH.

This sequence belongs to the NAD-dependent glycerol-3-phosphate dehydrogenase family.

It is found in the cytoplasm. It catalyses the reaction sn-glycerol 3-phosphate + NAD(+) = dihydroxyacetone phosphate + NADH + H(+). The enzyme catalyses sn-glycerol 3-phosphate + NADP(+) = dihydroxyacetone phosphate + NADPH + H(+). The protein operates within membrane lipid metabolism; glycerophospholipid metabolism. Catalyzes the reduction of the glycolytic intermediate dihydroxyacetone phosphate (DHAP) to sn-glycerol 3-phosphate (G3P), the key precursor for phospholipid synthesis. The protein is Glycerol-3-phosphate dehydrogenase [NAD(P)+] of Dehalococcoides mccartyi (strain ATCC BAA-2266 / KCTC 15142 / 195) (Dehalococcoides ethenogenes (strain 195)).